Here is a 243-residue protein sequence, read N- to C-terminus: Phosphatidylserine decarboxylase proenzyme (243 aa).

Ser-212 (schiff-base intermediate with substrate; via pyruvic acid) is an active-site residue. At Ser-212 the chain carries Pyruvic acid (Ser); by autocatalysis.

Belongs to the phosphatidylserine decarboxylase family. PSD-A subfamily. Heterodimer of a large membrane-associated beta subunit and a small pyruvoyl-containing alpha subunit. Requires pyruvate as cofactor. Is synthesized initially as an inactive proenzyme. Formation of the active enzyme involves a self-maturation process in which the active site pyruvoyl group is generated from an internal serine residue via an autocatalytic post-translational modification. Two non-identical subunits are generated from the proenzyme in this reaction, and the pyruvate is formed at the N-terminus of the alpha chain, which is derived from the carboxyl end of the proenzyme. The post-translation cleavage follows an unusual pathway, termed non-hydrolytic serinolysis, in which the side chain hydroxyl group of the serine supplies its oxygen atom to form the C-terminus of the beta chain, while the remainder of the serine residue undergoes an oxidative deamination to produce ammonia and the pyruvoyl prosthetic group on the alpha chain.

The protein localises to the cell membrane. It catalyses the reaction a 1,2-diacyl-sn-glycero-3-phospho-L-serine + H(+) = a 1,2-diacyl-sn-glycero-3-phosphoethanolamine + CO2. The protein operates within phospholipid metabolism; phosphatidylethanolamine biosynthesis; phosphatidylethanolamine from CDP-diacylglycerol: step 2/2. Functionally, catalyzes the formation of phosphatidylethanolamine (PtdEtn) from phosphatidylserine (PtdSer). The polypeptide is Phosphatidylserine decarboxylase proenzyme (Mycobacterium leprae (strain Br4923)).